Here is a 271-residue protein sequence, read N- to C-terminus: Putative pirin-like protein At3g59260 (271 aa).

Belongs to the pirin family.

The protein localises to the nucleus. This chain is Putative pirin-like protein At3g59260, found in Arabidopsis thaliana (Mouse-ear cress).